The sequence spans 522 residues: Sorting nexin-1 (522 aa).

Disordered stretches follow at residues 1–84 (MASG…QDQE) and 115–142 (SLPP…QEDQ). Phosphoserine is present on residues S32 and S39. Residues 35–45 (EAGDSDTEGED) are compositionally biased toward acidic residues. A phosphothreonine mark is found at T41 and T48. A compositionally biased stretch (polar residues) spans 55–73 (KHQSPKITTSLLPINNGSK). Residues S58 and S72 each carry the phosphoserine modification. Positions 132–142 (EELEEEEQEDQ) are enriched in acidic residues. Positions 143 to 272 (FDLTVGITDP…EFLEKEELPR (130 aa)) constitute a PX domain. A 1,2-diacyl-sn-glycero-3-phospho-(1D-myo-inositol-3-phosphate) is bound by residues R186, S188, and K214. S188 carries the post-translational modification Phosphoserine. K237 bears the N6-acetyllysine mark. R238 lines the a 1,2-diacyl-sn-glycero-3-phospho-(1D-myo-inositol-3-phosphate) pocket. S280 carries the phosphoserine modification. The segment at 281–298 (GAGLLKMFNKATDAVSKM) is membrane-binding amphipathic helix. The 221-residue stretch at 302 to 522 (MNESDIWFEE…AFLPEAKAIS (221 aa)) folds into the BAR domain.

Belongs to the sorting nexin family. Predominantly forms heterodimers with BAR domain-containing sorting nexins SNX5, SNX6 and SNX32; can self-associate to form homodimers. The heterodimers are proposed to self-assemble into helical arrays on the membrane to stabilize and expand local membrane curvature underlying endosomal tubule formation. Thought to be a component of the originally described retromer complex (also called SNX-BAR retromer) which is a pentamer containing the heterotrimeric retromer cargo-selective complex (CSC), also described as vacuolar protein sorting subcomplex (VPS) and a heterodimeric membrane-deforming subcomplex formed between SNX1 or SNX2 and SNX5 or SNX6 (also called SNX-BAR subcomplex); the respective CSC and SNX-BAR subcomplexes associate with low affinity. Interacts with SNX5, SNX6, SNX32, VPS26A, VPS29, VPS35, DRD5, DENND5A, KALRN, RHOG (GDP-bound form). The interaction with SNX2 is reported controversially. Interacts with DNAJC13; prevented by presence of HGS. Interacts with HGS.

Its subcellular location is the endosome membrane. The protein resides in the golgi apparatus. The protein localises to the trans-Golgi network membrane. It is found in the early endosome membrane. It localises to the cell projection. Its subcellular location is the lamellipodium. In terms of biological role, involved in several stages of intracellular trafficking. Interacts with membranes containing phosphatidylinositol 3-phosphate (PtdIns(3P)) or phosphatidylinositol 3,5-bisphosphate (PtdIns(3,5)P2). Acts in part as component of the retromer membrane-deforming SNX-BAR subcomplex. The SNX-BAR retromer mediates retrograde transport of cargo proteins from endosomes to the trans-Golgi network (TGN) and is involved in endosome-to-plasma membrane transport for cargo protein recycling. The SNX-BAR subcomplex functions to deform the donor membrane into a tubular profile called endosome-to-TGN transport carrier (ETC). Can sense membrane curvature and has in vitro vesicle-to-membrane remodeling activity. Involved in retrograde endosome-to-TGN transport of lysosomal enzyme receptors (IGF2R, M6PR and SORT1) and Shiginella dysenteria toxin stxB. Plays a role in targeting ligand-activated EGFR to the lysosomes for degradation after endocytosis from the cell surface and release from the Golgi. Involvement in retromer-independent endocytic trafficking of P2RY1 and lysosomal degradation of protease-activated receptor-1/F2R. Promotes KALRN- and RHOG-dependent but retromer-independent membrane remodeling such as lamellipodium formation; the function is dependent on GEF activity of KALRN. Required for endocytosis of DRD5 upon agonist stimulation but not for basal receptor trafficking. The sequence is that of Sorting nexin-1 (SNX1) from Homo sapiens (Human).